A 283-amino-acid chain; its full sequence is Gap junction beta-1 protein (283 aa).

The Cytoplasmic segment spans residues Met-1–Arg-22. The chain crosses the membrane as a helical span at residues Val-23–Gly-45. At Asp-46 to Arg-75 the chain is on the extracellular side. Residues Leu-76–Val-95 form a helical membrane-spanning segment. The Cytoplasmic portion of the chain corresponds to Ala-96–Thr-130. The helical transmembrane segment at Leu-131–Phe-153 threads the bilayer. The Extracellular portion of the chain corresponds to Tyr-154 to Thr-191. The helical transmembrane segment at Val-192–Val-214 threads the bilayer. The Cytoplasmic segment spans residues Arg-215 to Cys-283. 4 positions are modified to phosphoserine: Ser-233, Ser-258, Ser-266, and Ser-277.

The protein belongs to the connexin family. Beta-type (group I) subfamily. In terms of assembly, a connexon is composed of a hexamer of connexins. Interacts with CNST.

Its subcellular location is the cell membrane. It localises to the cell junction. The protein resides in the gap junction. One gap junction consists of a cluster of closely packed pairs of transmembrane channels, the connexons, through which materials of low MW diffuse from one cell to a neighboring cell. The protein is Gap junction beta-1 protein (GJB1) of Equus caballus (Horse).